The following is a 688-amino-acid chain: Soluble guanylate cyclase gcy-35 (688 aa).

His-105 provides a ligand contact to heme. Residues Leu-358–Met-401 adopt a coiled-coil conformation. Positions Thr-424 to Glu-552 constitute a Guanylate cyclase domain. Mg(2+)-binding residues include Asp-429 and Asp-473. Positions Val-644–Ser-688 are disordered. Residues Asn-646–Asn-659 are compositionally biased toward low complexity.

It belongs to the adenylyl cyclase class-4/guanylyl cyclase family. As to quaternary structure, heterodimer; heterodimerizes with gcy-36, and possibly with other soluble guanylate cyclases. Requires heme as cofactor. As to expression, expressed in URX, AQR and PQR neurons. Also expressed in ALN, SDQ and BDU neurons, and variably in AVM, PLM and PLN neurons, pharyngeal and body wall muscles, and the excretory cell.

Its subcellular location is the cytoplasm. The protein localises to the cell projection. It is found in the dendrite. It catalyses the reaction GTP = 3',5'-cyclic GMP + diphosphate. With respect to regulation, regulated by molecular oxygen, which binds to the heme binding site. Probably not activated by nitric oxide (NO). Its function is as follows. Plays a central role in social feeding behavior and oxygen sensation by synthesizing 3',5'-cyclic guanosine monophosphate (cGMP) from GTP. Oxygen, which binds to its heme-binding sites, probably regulates social behavior by modulating its activity. cGMP is a common second messenger in sensory transduction and is implicated in oxygen sensation. Indeed, C.elegans exhibits a strong behavioral preference for 5-12% oxygen, avoiding higher and lower oxygen levels; a higher level of oxygen inducing a naturally polymorphic social feeding behavior. Involved in avoidance of hyperoxia and for oxygen-induced aggregation and bordering, probably by mediating oxygen-sensing in URX, AQR and PQR sensory neurons. This chain is Soluble guanylate cyclase gcy-35 (gcy-35), found in Caenorhabditis elegans.